Here is a 429-residue protein sequence, read N- to C-terminus: Phosphomethylpyrimidine synthase (429 aa).

Substrate contacts are provided by residues N66, M95, Y124, H163, S185 to G187, D226 to R229, and E265. H269 is a binding site for Zn(2+). Residue Y292 participates in substrate binding. H333 contributes to the Zn(2+) binding site. Residues C407, C410, and C414 each coordinate [4Fe-4S] cluster.

The protein belongs to the ThiC family. [4Fe-4S] cluster is required as a cofactor.

It carries out the reaction 5-amino-1-(5-phospho-beta-D-ribosyl)imidazole + S-adenosyl-L-methionine = 4-amino-2-methyl-5-(phosphooxymethyl)pyrimidine + CO + 5'-deoxyadenosine + formate + L-methionine + 3 H(+). It functions in the pathway cofactor biosynthesis; thiamine diphosphate biosynthesis. In terms of biological role, catalyzes the synthesis of the hydroxymethylpyrimidine phosphate (HMP-P) moiety of thiamine from aminoimidazole ribotide (AIR) in a radical S-adenosyl-L-methionine (SAM)-dependent reaction. This Pyrococcus furiosus (strain ATCC 43587 / DSM 3638 / JCM 8422 / Vc1) protein is Phosphomethylpyrimidine synthase.